A 159-amino-acid polypeptide reads, in one-letter code: Large ribosomal subunit protein uL15 (159 aa).

Residues 21–34 are compositionally biased toward basic residues; it reads LRPAPGAHKSKIRV. The segment at 21 to 55 is disordered; sequence LRPAPGAHKSKIRVGRGEGSKGKTAGRGTKGSKAR.

Belongs to the universal ribosomal protein uL15 family. Part of the 50S ribosomal subunit.

Its function is as follows. Binds to the 23S rRNA. In Frankia casuarinae (strain DSM 45818 / CECT 9043 / HFP020203 / CcI3), this protein is Large ribosomal subunit protein uL15.